The following is a 138-amino-acid chain: Small ribosomal subunit protein uS11c (138 aa).

The disordered stretch occupies residues methionine 1–valine 22. The segment covering glycine 9–valine 22 has biased composition (basic residues).

Belongs to the universal ribosomal protein uS11 family. As to quaternary structure, part of the 30S ribosomal subunit.

It is found in the plastid. It localises to the chloroplast. The sequence is that of Small ribosomal subunit protein uS11c from Arabis hirsuta (Hairy rock-cress).